Consider the following 373-residue polypeptide: MALNVAPVRDTKWLTLEVCRQFQRGTCSRSDEECKFAHPPKSCQVENGRVIACFDSLKGRCSRENCKYLHPPTHLKTQLEINGRNNLIQQKTAAAMLAQQMQFMFPGTPLHPVPTFPVGPAIGTNTAISFAPYLAPVTPGVGLVPTEILPTTPVIVPGSPPVTVPGSTATQKLLRTDKLEVCREFQRGNCARGETDCRFAHPADSTMIDTSDNTVTVCMDYIKGRCMREKCKYFHPPAHLQAKIKAAQHQANQAAVAAQAAAAAATVMAFPPGALHPLPKRQALEKSNGTSAVFNPSVLHYQQALTSAQLQQHAAFIPTGSVLCMTPATSIDNSEIISRNGMECQESALRITKHCYCTYYPVSSSIELPQTAC.

4 C3H1-type zinc fingers span residues 13-41, 47-73, 176-204, and 212-238; these read WLTL…HPPK, NGRV…HPPT, TDKL…HPAD, and DNTV…HPPA.

This sequence belongs to the muscleblind family. Interacts with ITGA3. As to expression, expressed in heart, brain, placenta, lung, liver, skeletal muscle, kidney and pancreas.

The protein resides in the nucleus. Its subcellular location is the cytoplasm. Mediates pre-mRNA alternative splicing regulation. Acts either as activator or repressor of splicing on specific pre-mRNA targets. Inhibits cardiac troponin-T (TNNT2) pre-mRNA exon inclusion but induces insulin receptor (IR) pre-mRNA exon inclusion in muscle. Antagonizes the alternative splicing activity pattern of CELF proteins. RNA-binding protein that binds to 5'ACACCC-3' core sequence, termed zipcode, within the 3'UTR of ITGA3. Binds to CUG triplet repeat expansion in myotonic dystrophy muscle cells by sequestering the target RNAs. Together with RNA binding proteins RBPMS and RBFOX2, activates vascular smooth muscle cells alternative splicing events. Regulates NCOR2 alternative splicing. Seems to regulate expression and localization of ITGA3 by transporting it from the nucleus to cytoplasm at adhesion plaques. May play a role in myotonic dystrophy pathophysiology (DM). The protein is Muscleblind-like protein 2 (MBNL2) of Homo sapiens (Human).